Consider the following 235-residue polypeptide: Claudin-16 (235 aa).

The Cytoplasmic portion of the chain corresponds to 1–3; it reads MRD. A helical transmembrane segment spans residues 4–24; sequence LLQYIACFFAFFSAGFLIVAT. The Extracellular portion of the chain corresponds to 25–79; the sequence is WTDCWMVNADDSLEVSTKCRGLWWECVTNAFDGIRTCDEYDSILAEHPLKLVVTR. A helical transmembrane segment spans residues 80 to 100; it reads ALMITADILAGFGFLTLLLGL. Over 101–115 the chain is Cytoplasmic; the sequence is DCVKFLPDEPYIKVR. Residues 116–136 form a helical membrane-spanning segment; the sequence is ICFVAGATLLIAGTPGIIGSV. The Extracellular segment spans residues 137 to 169; it reads WYAVDVYVERSTLVLHNIFLGIQYKFGWSCWLG. A helical membrane pass occupies residues 170–190; sequence MAGSLGCFLAGAVLTCCLYLF. Over 191–235 the chain is Cytoplasmic; the sequence is KDVGPERNYPYSLRKAYSAAGVSMAKSYSAPRTETAKMYAVDTRV. The Interaction with TJP1 signature appears at 233 to 235; the sequence is TRV.

The protein belongs to the claudin family. In terms of assembly, can form heteropolymeric tight junction strands with other claudins. Interacts with CLDN19. Interacts (via PDZ-binding motif TRV) with TJP1 (via PDZ domain). Cannot form tight junction strands on its own. Kidney-specific, including the thick ascending limb of Henle (TAL).

It is found in the cell junction. Its subcellular location is the tight junction. The protein localises to the cell membrane. The enzyme catalyses Mg(2+)(in) = Mg(2+)(out). It catalyses the reaction Ca(2+)(in) = Ca(2+)(out). The catalysed reaction is Na(+)(in) = Na(+)(out). It carries out the reaction K(+)(in) = K(+)(out). The enzyme catalyses Rb(+)(in) = Rb(+)(out). It catalyses the reaction Cs(+)(in) = Cs(+)(out). The catalysed reaction is Li(+)(in) = Li(+)(out). In terms of biological role, forms paracellular channels: coassembles with CLDN19 into tight junction strands with cation-selective channels through the strands, conveying epithelial permeability in a process known as paracellular tight junction permeability. Involved in the maintenance of ion gradients along the nephron. In the thick ascending limb (TAL) of Henle's loop, facilitates sodium paracellular permeability from the interstitial compartment to the lumen, contributing to the lumen-positive transepithelial potential that drives paracellular magnesium and calcium reabsorption. The polypeptide is Claudin-16 (Homo sapiens (Human)).